Here is a 156-residue protein sequence, read N- to C-terminus: C-type lectin lectoxin-Phi1 (156 aa).

An N-terminal signal peptide occupies residues 1 to 23 (MGRFIFVSLGLLVLAFSLSGIGA). 3 disulfide bridges follow: Cys27–Cys38, Cys55–Cys154, and Cys129–Cys146. Residues 34 to 155 (HNVSCYKLIN…CNRRHRFLCK (122 aa)) enclose the C-type lectin domain. Residues Asn35 and Asn109 are each glycosylated (N-linked (GlcNAc...) asparagine). The short motif at 119-121 (EPN) is the Mannose-binding element. Glu127, Asn142, and Asp143 together coordinate Ca(2+).

The protein belongs to the true venom lectin family. In terms of tissue distribution, expressed by the venom gland.

It is found in the secreted. Its function is as follows. Mannose-binding lectin which recognizes specific carbohydrate structures and agglutinates a variety of animal cells by binding to cell-surface glycoproteins and glycolipids. May be a calcium-dependent lectin. The protein is C-type lectin lectoxin-Phi1 of Philodryas olfersii (Green snake).